The following is a 173-amino-acid chain: Coordinator of PRMT5 and differentiation stimulator (173 aa).

An N-acetylmethionine modification is found at Met1. A disordered region spans residues 1–70 (MDPQAATGRG…EGPSSEEEGF (70 aa)). Ser64 and Ser65 each carry phosphoserine.

Interacts with PRMT5. Interacts with histone H4; specifically interacts with the N-terminus of histone H4 but not with histone H3. Interacts with CBFB. Found in a complex with PRMT5, RUNX1 and CBFB.

The protein resides in the nucleus. Functionally, histone-binding protein required for histone H4 methyltransferase activity of PRMT5. Specifically required for histone H4 'Arg-3' methylation mediated by PRMT5, but not histone H3 'Arg-8' methylation, suggesting that it modulates the substrate specificity of PRMT5. Specifically interacts with the N-terminus of histone H4 but not with histone H3, suggesting that it acts by promoting the association between histone H4 and PRMT5. Involved in CCNE1 promoter repression. Plays a role in muscle cell differentiation by modulating the recruitment of PRMT5 to the promoter of genes involved in the coordination between cell cycle exit and muscle differentiation. This chain is Coordinator of PRMT5 and differentiation stimulator (Coprs), found in Mus musculus (Mouse).